The primary structure comprises 503 residues: Cytochrome P450 3A12 (503 aa).

Cys-442 is a heme binding site.

This sequence belongs to the cytochrome P450 family. Heme serves as cofactor.

The protein resides in the endoplasmic reticulum membrane. It is found in the microsome membrane. It carries out the reaction an organic molecule + reduced [NADPH--hemoprotein reductase] + O2 = an alcohol + oxidized [NADPH--hemoprotein reductase] + H2O + H(+). Cytochromes P450 are a group of heme-thiolate monooxygenases. In liver microsomes, this enzyme is involved in an NADPH-dependent electron transport pathway. It oxidizes a variety of structurally unrelated compounds, including steroids, fatty acids, and xenobiotics. This chain is Cytochrome P450 3A12 (CYP3A12), found in Canis lupus familiaris (Dog).